A 311-amino-acid chain; its full sequence is MKVAVLGAAGGIGQALALLLKLQLPAGTDLALYDIAPVTPGVAVDVSHIPTAVNVKGFSGEDPTPALEGADVVLISAGVARKPGMDRSDLFNINAGIVRGLIEKVAITCPKACVGIITNPVNTTVAIAAEVLKKAGVYDKRKLFGVTTLDVLRSETFVAELKGLNVSRTSVPVIGGHSGVTILPLLSQVQYAKWNEEEIEPLTKRIQNAGTEVVNAKAGGGSATLSMAQAAARFARSLVKGLSGETVVECTYVEGDGKYARFFSQPVRLGKEGVEEILPIGPLSNFEQQALENMLPTLRADIELGEKFING.

NAD(+) contacts are provided by residues 7–13 and aspartate 34; that span reads GAAGGIG. Positions 81 and 87 each coordinate substrate. Residues asparagine 94 and 117–119 contribute to the NAD(+) site; that span reads ITN. Residues asparagine 119 and arginine 153 each contribute to the substrate site. Catalysis depends on histidine 177, which acts as the Proton acceptor. Methionine 227 is an NAD(+) binding site.

It belongs to the LDH/MDH superfamily. MDH type 1 family. Homodimer.

The catalysed reaction is (S)-malate + NAD(+) = oxaloacetate + NADH + H(+). Functionally, catalyzes the reversible oxidation of malate to oxaloacetate. The sequence is that of Malate dehydrogenase from Haemophilus influenzae (strain PittGG).